The following is a 70-amino-acid chain: Ubiquinol-cytochrome c reductase complex assembly factor 5 (70 aa).

The Mitochondrial matrix portion of the chain corresponds to 1-19; that stretch reads MFTRAQVRRILQRVPGKQR. The helical transmembrane segment at 20–41 threads the bilayer; that stretch reads FGIYRFLPFFFVLGGTMEWIMI. At 42-70 the chain is on the mitochondrial intermembrane side; it reads KVRVGQETFYDVYRRKASERQYQRRLEDE.

It belongs to the UQCC5 family. As to quaternary structure, associates with the mitochondrial ribosome. Interacts with UQCC6. Interacts with MT-CYB; interacts with newly synthesizes MT-CYB. Forms a complex, named COMB/coordinator of mitochondrial CYTB biogenesis, composed of UQCC1, UQCC2, UQCC4, UQCC5 and UQCC6; regulates MT-CYB synthesis and promotes its membrane insertion.

It localises to the mitochondrion inner membrane. Its function is as follows. Required for the assembly and stability of the mitochondrial ubiquinol-cytochrome c reductase complex (complex III (CIII) or cytochrome b-c1 complex), a multisubunit transmembrane complex that is part of the mitochondrial electron transport chain (ETC) which drives oxidative phosphorylation. Mediates early complex III biogenesis. Participates in regulating the levels of electron transport chain proteins, and therefore energy supply, in response to changes in energy demand. Also involved in the first steps of cytochrome c oxidase complex (complex IV) assembly. The sequence is that of Ubiquinol-cytochrome c reductase complex assembly factor 5 from Homo sapiens (Human).